The primary structure comprises 437 residues: Histidinol dehydrogenase (437 aa).

NAD(+)-binding residues include tyrosine 133, glutamine 191, and asparagine 214. Serine 240, glutamine 262, and histidine 265 together coordinate substrate. Zn(2+) contacts are provided by glutamine 262 and histidine 265. Catalysis depends on proton acceptor residues glutamate 329 and histidine 330. Residues histidine 330, aspartate 363, glutamate 417, and histidine 422 each coordinate substrate. Aspartate 363 contacts Zn(2+). Residue histidine 422 participates in Zn(2+) binding.

It belongs to the histidinol dehydrogenase family. Homodimer. The cofactor is Zn(2+).

It catalyses the reaction L-histidinol + 2 NAD(+) + H2O = L-histidine + 2 NADH + 3 H(+). It participates in amino-acid biosynthesis; L-histidine biosynthesis; L-histidine from 5-phospho-alpha-D-ribose 1-diphosphate: step 9/9. Catalyzes the sequential NAD-dependent oxidations of L-histidinol to L-histidinaldehyde and then to L-histidine. This is Histidinol dehydrogenase from Blochmanniella floridana.